Consider the following 242-residue polypeptide: 4-hydroxy-tetrahydrodipicolinate reductase (242 aa).

NAD(+) contacts are provided by residues 8–13, 75–77, and 99–102; these read GAKGRM, GTT, and ATNM. The active-site Proton donor/acceptor is H131. H132 is a (S)-2,3,4,5-tetrahydrodipicolinate binding site. K135 acts as the Proton donor in catalysis. Residue 141 to 142 participates in (S)-2,3,4,5-tetrahydrodipicolinate binding; that stretch reads GT.

It belongs to the DapB family.

It is found in the cytoplasm. It catalyses the reaction (S)-2,3,4,5-tetrahydrodipicolinate + NAD(+) + H2O = (2S,4S)-4-hydroxy-2,3,4,5-tetrahydrodipicolinate + NADH + H(+). The catalysed reaction is (S)-2,3,4,5-tetrahydrodipicolinate + NADP(+) + H2O = (2S,4S)-4-hydroxy-2,3,4,5-tetrahydrodipicolinate + NADPH + H(+). It functions in the pathway amino-acid biosynthesis; L-lysine biosynthesis via DAP pathway; (S)-tetrahydrodipicolinate from L-aspartate: step 4/4. Its function is as follows. Catalyzes the conversion of 4-hydroxy-tetrahydrodipicolinate (HTPA) to tetrahydrodipicolinate. In Campylobacter jejuni subsp. jejuni serotype O:6 (strain 81116 / NCTC 11828), this protein is 4-hydroxy-tetrahydrodipicolinate reductase.